We begin with the raw amino-acid sequence, 302 residues long: NADH-cytochrome b5 reductase 2 (302 aa).

A propeptide spans 1 to 41 (MFSRLSRSHSKALPIALGTVAIAAATAFYFANRNQHSFVFN) (removed in mature form). Residues 12-32 (ALPIALGTVAIAAATAFYFAN) form a helical membrane-spanning segment. In terms of domain architecture, FAD-binding FR-type spans 51 to 155 (DKWIDLPISK…KGPIMKWKWQ (105 aa)). 158–193 (QFKSITLLGAGTGINPLYQLAHHIVENPNDKTKVNL) contributes to the FAD binding site. Serine 278 is modified (phosphoserine).

It belongs to the flavoprotein pyridine nucleotide cytochrome reductase family. The cofactor is FAD. There are two isoforms of NADH-cytochrome b5 reductase, a 34 kDa form (p34) and a 32 kDa form (p32). The p34 form becomes firmly anchored to the outer mitochondrial membrane after an incomplete translocation arrest. The p32 form is formed after translocation of the p34 precursor to the inner mitochondrial membrane, where it is processed by mitochondrial inner membrane peptidase (IMP) complex and released to the intermembrane space.

It is found in the mitochondrion intermembrane space. The protein resides in the mitochondrion outer membrane. It catalyses the reaction 2 Fe(III)-[cytochrome b5] + NADH = 2 Fe(II)-[cytochrome b5] + NAD(+) + H(+). Its function is as follows. The outer membrane form may mediate the reduction of outer membrane cytochrome b5, and the soluble inter-membrane space form may transfer electrons from external NADH to cytochrome c, thereby mediating an antimycin-insensitive, energy-coupled oxidation of external NADH by yeast mitochondria. Involved in the reduction of D-erythroascorbyl free radicals. The protein is NADH-cytochrome b5 reductase 2 (MCR1) of Saccharomyces cerevisiae (strain YJM789) (Baker's yeast).